The chain runs to 225 residues: UPF0758 protein SZO_09140 (225 aa).

The region spanning 102 to 224 is the MPN domain; the sequence is PVLSSAQVAE…YYSFREKSDL (123 aa). 3 residues coordinate Zn(2+): histidine 173, histidine 175, and aspartate 186. The JAMM motif motif lies at 173–186; sequence HNHPSGLTKPSAND.

Belongs to the UPF0758 family.

This Streptococcus equi subsp. zooepidemicus (strain H70) protein is UPF0758 protein SZO_09140.